The following is a 1191-amino-acid chain: Pyruvate-flavodoxin oxidoreductase (1191 aa).

4Fe-4S ferredoxin-type domains are found at residues 687-716 and 744-773; these read QVCS…VKAV and YVLA…TGAR. [4Fe-4S] cluster is bound by residues cysteine 696, cysteine 699, cysteine 702, cysteine 706, cysteine 753, cysteine 756, cysteine 759, cysteine 763, cysteine 825, cysteine 828, cysteine 853, and cysteine 1085.

It belongs to the pyruvate:ferredoxin/flavodoxin oxidoreductase family. [4Fe-4S] cluster serves as cofactor.

It carries out the reaction oxidized [flavodoxin] + pyruvate + CoA + 2 H(+) = reduced [flavodoxin] + acetyl-CoA + CO2. In terms of biological role, oxidoreductase required for the transfer of electrons from pyruvate to flavodoxin, which reduces nitrogenase. The polypeptide is Pyruvate-flavodoxin oxidoreductase (nifJ) (Rhodospirillum rubrum (strain ATCC 11170 / ATH 1.1.1 / DSM 467 / LMG 4362 / NCIMB 8255 / S1)).